A 749-amino-acid chain; its full sequence is Cytosolic phospholipase A2 (749 aa).

The 124-residue stretch at 1 to 124 (MASIDPYQHI…GEKKQVPFTF (124 aa)) folds into the C2 domain. The segment at 1-178 (MASIDPYQHI…LRKLLGPEKT (178 aa)) is phospholipid binding. 7 residues coordinate Ca(2+): Asp-40, Thr-41, Asp-43, Asn-65, Asp-93, Ala-94, and Asn-95. A PLA2c domain is found at 138–740 (VCSSTDLRFS…NDVEARKLLH (603 aa)). Residue Ser-229 is the Nucleophile of the active site. The disordered stretch occupies residues 417 to 458 (MEEEIENLKPKHILGNDSSDSDDEMQEPKGTENSKAEEEYQR). The span at 442 to 457 (QEPKGTENSKAEEEYQ) shows a compositional bias: basic and acidic residues. Residue Asp-549 is the Proton acceptor of the active site.

Its subcellular location is the cytoplasm. The protein resides in the cytoplasmic vesicle. The catalysed reaction is a 1,2-diacyl-sn-glycero-3-phosphocholine + H2O = a 1-acyl-sn-glycero-3-phosphocholine + a fatty acid + H(+). It carries out the reaction a 1-acyl-sn-glycero-3-phosphocholine + H2O = sn-glycerol 3-phosphocholine + a fatty acid + H(+). With respect to regulation, stimulated by agonists such as ATP, EGF, thrombin and bradykinin as well as by cytosolic Ca(2+). In terms of biological role, selectively hydrolyzes arachidonyl phospholipids in the sn-2 position releasing arachidonic acid. Together with its lysophospholipid activity, it is implicated in the initiation of the inflammatory response. The polypeptide is Cytosolic phospholipase A2 (pla2g4a) (Xenopus tropicalis (Western clawed frog)).